The sequence spans 193 residues: Protein D5 (193 aa).

In terms of biological role, repression of replication initiation (possible). The sequence is that of Protein D5 (ddpE) from Dictyostelium discoideum (Social amoeba).